Reading from the N-terminus, the 180-residue chain is Sec-independent protein translocase protein TatB (180 aa).

A helical membrane pass occupies residues 1–21 (MFDIGWSELLVIGVVALIAIG). The tract at residues 77-180 (TRGDLMTRLT…DQTARGAKAS (104 aa)) is disordered. Over residues 105-129 (ADKPSVSSDAASASGSAAPEAGAAE) the composition is skewed to low complexity.

Belongs to the TatB family. As to quaternary structure, the Tat system comprises two distinct complexes: a TatABC complex, containing multiple copies of TatA, TatB and TatC subunits, and a separate TatA complex, containing only TatA subunits. Substrates initially bind to the TatABC complex, which probably triggers association of the separate TatA complex to form the active translocon.

The protein localises to the cell inner membrane. In terms of biological role, part of the twin-arginine translocation (Tat) system that transports large folded proteins containing a characteristic twin-arginine motif in their signal peptide across membranes. Together with TatC, TatB is part of a receptor directly interacting with Tat signal peptides. TatB may form an oligomeric binding site that transiently accommodates folded Tat precursor proteins before their translocation. The chain is Sec-independent protein translocase protein TatB from Nitrobacter winogradskyi (strain ATCC 25391 / DSM 10237 / CIP 104748 / NCIMB 11846 / Nb-255).